The following is a 467-amino-acid chain: Asparagine--tRNA ligase (467 aa).

This sequence belongs to the class-II aminoacyl-tRNA synthetase family. In terms of assembly, homodimer.

It localises to the cytoplasm. The enzyme catalyses tRNA(Asn) + L-asparagine + ATP = L-asparaginyl-tRNA(Asn) + AMP + diphosphate + H(+). The chain is Asparagine--tRNA ligase from Legionella pneumophila (strain Paris).